Reading from the N-terminus, the 61-residue chain is Conotoxin TeAr154 (61 aa).

Positions 1–19 (MHCLPVFVILLLLTASGLS) are cleaved as a signal peptide. The propeptide occupies 20–47 (VDARPKTEDDVPLSSFRDNTKSTLQRLL). 4-carboxyglutamate is present on E57.

Post-translationally, contains 2 disulfide bonds that can be either 'C1-C3, C2-C4' or 'C1-C4, C2-C3', since these disulfide connectivities have been observed for conotoxins with cysteine framework V (for examples, see AC P0DQQ7 and AC P81755). In terms of processing, contains 2 disulfide bonds. As to expression, expressed by the venom duct.

The protein resides in the secreted. In Conus textile (Cloth-of-gold cone), this protein is Conotoxin TeAr154.